A 501-amino-acid polypeptide reads, in one-letter code: Geissoschizine oxidase (501 aa).

The helical transmembrane segment at 1-21 (MEFSFSSPALYIVYFLLFFVV) threads the bilayer. N60 carries an N-linked (GlcNAc...) asparagine glycan. C442 is a heme binding site.

The protein belongs to the cytochrome P450 family. Heme is required as a cofactor. Expressed in leaf epidermis. Also present in the leaf internal phloem-associated parenchyma (IPAP) inside the mesophyll.

The protein resides in the membrane. It carries out the reaction (19E)-geissoschizine + reduced [NADPH--hemoprotein reductase] + O2 = akuammicine + formate + oxidized [NADPH--hemoprotein reductase] + H2O + H(+). It catalyses the reaction (19E)-geissoschizine + reduced [NADPH--hemoprotein reductase] + O2 = 3,17-didehydrostemmadenine + oxidized [NADPH--hemoprotein reductase] + 2 H2O. Its pathway is alkaloid biosynthesis. Functionally, component of the seco-iridoid and derivatives monoterpenoid indole alkaloids (MIAs, e.g. vincristine, quinine, and strychnine) biosynthesis pathway. Catalyzes the oxidation of 19E-geissoschizine to produce a short-lived MIA unstable intermediate which can be spontaneously converted into akuammicine or oxidized by Redox1 and Redox2 to produce stemmadenine and 16S/R-deshydroxymethylstemmadenine (16S/R-DHS). This Catharanthus roseus (Madagascar periwinkle) protein is Geissoschizine oxidase.